The primary structure comprises 164 residues: Glycine cleavage system H protein, mitochondrial (164 aa).

Residues 1 to 39 (MAWLVLRRLGPVLAPRCPRLSLRPQVPAVRRLGTGSLLL) constitute a mitochondrion transit peptide. The Lipoyl-binding domain occupies 57–139 (IGTVGISNFA…YQDGWLIKMT (83 aa)). Position 98 is an N6-lipoyllysine (K98).

This sequence belongs to the GcvH family. The glycine cleavage system is composed of four proteins: P (GLDC), T (GCST), L (DLD) and H (GCSH). Interacts with GLDC. (R)-lipoate serves as cofactor.

It localises to the mitochondrion. Functionally, the glycine cleavage system catalyzes the degradation of glycine. The H protein (GCSH) shuttles the methylamine group of glycine from the P protein (GLDC) to the T protein (GCST). Has a pivotal role in the lipoylation of enzymes involved in cellular energetics such as the mitochondrial dihydrolipoyllysine-residue acetyltransferase component of pyruvate dehydrogenase complex (DLAT), and the mitochondrial dihydrolipoyllysine-residue succinyltransferase component of 2-oxoglutarate dehydrogenase complex (DLST). The polypeptide is Glycine cleavage system H protein, mitochondrial (Gallus gallus (Chicken)).